Here is an 85-residue protein sequence, read N- to C-terminus: Progonadoliberin-2 (85 aa).

A signal peptide spans 1-23; the sequence is MCVSRLALLLGLLLCVGAQLSFA. A Pyrrolidone carboxylic acid modification is found at Q24. The residue at position 33 (G33) is a Glycine amide.

Belongs to the GnRH family. In terms of tissue distribution, expressed in only one cell group in the mesencephalon.

It localises to the secreted. Its function is as follows. Stimulates the secretion of gonadotropins. The protein is Progonadoliberin-2 (gnrh2) of Haplochromis burtoni (Burton's mouthbrooder).